A 207-amino-acid chain; its full sequence is Large ribosomal subunit protein bL25 (207 aa).

The protein belongs to the bacterial ribosomal protein bL25 family. CTC subfamily. In terms of assembly, part of the 50S ribosomal subunit; part of the 5S rRNA/L5/L18/L25 subcomplex. Contacts the 5S rRNA. Binds to the 5S rRNA independently of L5 and L18.

This is one of the proteins that binds to the 5S RNA in the ribosome where it forms part of the central protuberance. This is Large ribosomal subunit protein bL25 from Paraburkholderia xenovorans (strain LB400).